The primary structure comprises 142 residues: Peptidyl-prolyl cis-trans isomerase FKBP2 (142 aa).

The N-terminal stretch at 1–21 is a signal peptide; it reads MRLSWFRVLTVLSICLSAVAT. Residues 49-137 form the PPIase FKBP-type domain; that stretch reads GDVLHMHYTG…VFEVELLKIE (89 aa). Residues 139–142 carry the Prevents secretion from ER motif; it reads RTEL.

It belongs to the FKBP-type PPIase family. FKBP2 subfamily. Interacts with ARFGEF1/BIG1 and the C-terminal of EPB41L2. In terms of tissue distribution, T-cells and thymus.

Its subcellular location is the endoplasmic reticulum membrane. The enzyme catalyses [protein]-peptidylproline (omega=180) = [protein]-peptidylproline (omega=0). With respect to regulation, inhibited by both FK506 and rapamycin. PPIases accelerate the folding of proteins. It catalyzes the cis-trans isomerization of proline imidic peptide bonds in oligopeptides. In Homo sapiens (Human), this protein is Peptidyl-prolyl cis-trans isomerase FKBP2 (FKBP2).